The primary structure comprises 78 residues: Conotoxin TsMEKL-P012 (78 aa).

The first 19 residues, 1–19 (MEKLTILLLLAAVLVLAQA), serve as a signal peptide directing secretion. Residues 20 to 38 (LIKKGGGEKRQKEKINFLS) constitute a propeptide that is removed on maturation. Cystine bridges form between C52-C66, C59-C70, and C65-C75.

It belongs to the conotoxin O2 superfamily. As to expression, expressed by the venom duct.

It localises to the secreted. This is Conotoxin TsMEKL-P012 from Conus tessulatus (Tessellate cone).